The following is a 367-amino-acid chain: Hyaluronidase (367 aa).

2 disulfide bridges follow: C48–C337 and C214–C226. N-linked (GlcNAc...) asparagine glycosylation occurs at N108. The active-site Proton donor is the E138. An N-linked (GlcNAc...) asparagine glycan is attached at N354.

This sequence belongs to the glycosyl hydrolase 56 family.

It catalyses the reaction Random hydrolysis of (1-&gt;4)-linkages between N-acetyl-beta-D-glucosamine and D-glucuronate residues in hyaluronate.. Its function is as follows. May play a role in reproduction. This chain is Hyaluronidase, found in Polistes annularis (Paper wasp).